The chain runs to 476 residues: Eukaryotic translation initiation factor 3 subunit L (476 aa).

Residues 257–452 (DAIRMFSHIL…DLDYALENDL (196 aa)) enclose the PCI domain.

The protein belongs to the eIF-3 subunit L family. Component of the eukaryotic translation initiation factor 3 (eIF-3) complex.

Its subcellular location is the cytoplasm. Functionally, component of the eukaryotic translation initiation factor 3 (eIF-3) complex, which is involved in protein synthesis of a specialized repertoire of mRNAs and, together with other initiation factors, stimulates binding of mRNA and methionyl-tRNAi to the 40S ribosome. The eIF-3 complex specifically targets and initiates translation of a subset of mRNAs involved in cell proliferation. The polypeptide is Eukaryotic translation initiation factor 3 subunit L (Aspergillus niger (strain ATCC MYA-4892 / CBS 513.88 / FGSC A1513)).